The following is a 129-amino-acid chain: Fluoride-specific ion channel FluC (129 aa).

The next 4 helical transmembrane spans lie at 8 to 28 (ILLVGVGGFLGSVARYLVALW), 34 to 54 (AVFPFATLTVNLLGSFLIGFI), 70 to 90 (IFLVTGFCGGFTTFSSYMIEH), and 102 to 122 (AALYLFGSLIGGFIALYLGII). 2 residues coordinate Na(+): Gly78 and Thr81.

This sequence belongs to the fluoride channel Fluc/FEX (TC 1.A.43) family.

It is found in the cell inner membrane. The enzyme catalyses fluoride(in) = fluoride(out). With respect to regulation, na(+) is not transported, but it plays an essential structural role and its presence is essential for fluoride channel function. In terms of biological role, fluoride-specific ion channel. Important for reducing fluoride concentration in the cell, thus reducing its toxicity. In Chlorobium chlorochromatii (strain CaD3), this protein is Fluoride-specific ion channel FluC.